The primary structure comprises 428 residues: C4-dicarboxylate transport protein (428 aa).

8 helical membrane passes run 8–28 (SLYFQVLTAIAIGILLGHFYP), 44–64 (LIKMIIAPVIFCTVVTGIAGM), 76–96 (VALLYFEIVSTIALIIGLIIV), 142–162 (IGAFASGNILQVLLFAVLFGF), 184–204 (VIFGIINMIMRLAPIGAFGAM), 222–242 (LIICFYITCILFVVLVLGSIA), 326–346 (IVHQITLLIVLLLSSKGAAGV), and 352–372 (IVLAATLSAVGHLPVAGLALI).

The protein belongs to the dicarboxylate/amino acid:cation symporter (DAACS) (TC 2.A.23) family.

Its subcellular location is the cell inner membrane. Responsible for the transport of dicarboxylates such as succinate, fumarate, and malate from the periplasm across the membrane. This Shigella dysenteriae serotype 1 (strain Sd197) protein is C4-dicarboxylate transport protein.